We begin with the raw amino-acid sequence, 1264 residues long: Valine--tRNA ligase (1264 aa).

Ser-2 bears the N-acetylserine mark. Positions 89-219 (GSRAAVLVQQ…YSGARSVTQQ (131 aa)) constitute a GST C-terminal domain. A compositionally biased stretch (polar residues) spans 218-230 (QQPGSEITAPQKT). The interval 218–296 (QQPGSEITAP…GEKKDVSGTM (79 aa)) is disordered. Basic and acidic residues-rich tracts occupy residues 234–248 (LKKE…EKFQ) and 260–275 (HGEK…KRDP). The 'HIGH' region signature appears at 344–354 (PNVTGSLHLGH). Ser-437 and Ser-527 each carry phosphoserine. At Lys-645 the chain carries N6-acetyllysine. The short motif at 862 to 866 (KMSKS) is the 'KMSKS' region element. Residue Lys-865 coordinates ATP.

This sequence belongs to the class-I aminoacyl-tRNA synthetase family. Forms high-molecular-mass aggregates with elongation factor 1.

It carries out the reaction tRNA(Val) + L-valine + ATP = L-valyl-tRNA(Val) + AMP + diphosphate. With respect to regulation, can be regulated by protein kinase C-dependent phosphorylation. This is Valine--tRNA ligase (Vars1) from Rattus norvegicus (Rat).